Consider the following 118-residue polypeptide: Large ribosomal subunit protein uL18 (118 aa).

This sequence belongs to the universal ribosomal protein uL18 family. Part of the 50S ribosomal subunit; part of the 5S rRNA/L5/L18/L25 subcomplex. Contacts the 5S and 23S rRNAs.

Its function is as follows. This is one of the proteins that bind and probably mediate the attachment of the 5S RNA into the large ribosomal subunit, where it forms part of the central protuberance. This chain is Large ribosomal subunit protein uL18, found in Brachyspira hyodysenteriae (strain ATCC 49526 / WA1).